A 343-amino-acid polypeptide reads, in one-letter code: Autoinducer 2 import system permease protein LsrC (343 aa).

The next 9 membrane-spanning stretches (helical) occupy residues 13–33 (FLAILALFGVLVALNPAYLSF), 38–58 (MIFASSQILILLALGAALVML), 61–81 (NIDVSVGSTVGLCAIAVGVAL), 92–112 (LFALAIGALAGAFNGLLVVGL), 114–134 (IPAIVATLGTLGLYRGAMLLW), 154–174 (VALGVSPLGMAVLFLVLIGAW), 212–232 (INGMLAACAGIVFASQIGFVP), 251–271 (GISLLGGTGTLIGAFLGAFFL), and 283–303 (LPAWWNDFIAGLVLLGVLVLD). The disordered stretch occupies residues 321-343 (RFQPGNKGGKHVTPFPKRKKEVA).

Belongs to the binding-protein-dependent transport system permease family. AraH/RbsC subfamily. The complex is composed of two ATP-binding proteins (LsrA), two transmembrane proteins (LsrC and LsrD) and a solute-binding protein (LsrB).

It is found in the cell inner membrane. Its function is as follows. Part of the ABC transporter complex LsrABCD involved in autoinducer 2 (AI-2) import. Probably responsible for the translocation of the substrate across the membrane. The sequence is that of Autoinducer 2 import system permease protein LsrC (lsrC) from Enterobacter sp. (strain 638).